Reading from the N-terminus, the 325-residue chain is ATP-dependent (S)-NAD(P)H-hydrate dehydratase (325 aa).

In terms of domain architecture, YjeF C-terminal spans Leu-9–Val-315. (6S)-NADPHX-binding positions include Gly-119 and Asn-172–Arg-178. ATP is bound by residues Lys-211 to Asp-215 and Gly-230 to Gly-239. Asp-240 is a (6S)-NADPHX binding site.

This sequence belongs to the NnrD/CARKD family. Requires Mg(2+) as cofactor.

It is found in the cytoplasm. It carries out the reaction (6S)-NADHX + ATP = ADP + phosphate + NADH + H(+). It catalyses the reaction (6S)-NADPHX + ATP = ADP + phosphate + NADPH + H(+). Its function is as follows. Catalyzes the dehydration of the S-form of NAD(P)HX at the expense of ATP, which is converted to ADP. Together with NAD(P)HX epimerase, which catalyzes the epimerization of the S- and R-forms, the enzyme allows the repair of both epimers of NAD(P)HX, a damaged form of NAD(P)H that is a result of enzymatic or heat-dependent hydration. This is ATP-dependent (S)-NAD(P)H-hydrate dehydratase from Phaeosphaeria nodorum (strain SN15 / ATCC MYA-4574 / FGSC 10173) (Glume blotch fungus).